A 294-amino-acid chain; its full sequence is Cell division protein ZipA (294 aa).

Residue Met-1 is a topological domain, periplasmic. Residues 2–22 form a helical membrane-spanning segment; sequence EIGLREWLILIGIIVIAGILF. The Cytoplasmic portion of the chain corresponds to 23–294; the sequence is DGWRRMRGGK…FERRALTQKR (272 aa). The interval 47-107 is disordered; sequence PDEEGSAEVL…GKRAAEMQPQ (61 aa). The span at 82–91 shows a compositional bias: basic and acidic residues; that stretch reads AREREREQKP.

This sequence belongs to the ZipA family. As to quaternary structure, interacts with FtsZ via their C-terminal domains.

Its subcellular location is the cell inner membrane. Functionally, essential cell division protein that stabilizes the FtsZ protofilaments by cross-linking them and that serves as a cytoplasmic membrane anchor for the Z ring. Also required for the recruitment to the septal ring of downstream cell division proteins. This Pseudomonas putida (strain W619) protein is Cell division protein ZipA.